A 142-amino-acid chain; its full sequence is Hemoglobin subunit alpha-A (142 aa).

Residues 2 to 142 (VLSAADKTNV…VGAVLTAKYR (141 aa)) form the Globin domain. Residue histidine 59 participates in O2 binding. Histidine 88 contacts heme b.

The protein belongs to the globin family. As to quaternary structure, heterotetramer of two alpha chains and two beta chains. In terms of tissue distribution, red blood cells.

Functionally, involved in oxygen transport from the lung to the various peripheral tissues. The polypeptide is Hemoglobin subunit alpha-A (HBAA) (Mareca penelope (Eurasian wigeon)).